The following is a 211-amino-acid chain: Outer-membrane lipoprotein carrier protein (211 aa).

Positions 1–25 (MRAIRMLLVSALTLGSLSATLSAHA) are cleaved as a signal peptide.

The protein belongs to the LolA family. In terms of assembly, monomer.

The protein localises to the periplasm. Functionally, participates in the translocation of lipoproteins from the inner membrane to the outer membrane. Only forms a complex with a lipoprotein if the residue after the N-terminal Cys is not an aspartate (The Asp acts as a targeting signal to indicate that the lipoprotein should stay in the inner membrane). The protein is Outer-membrane lipoprotein carrier protein of Pseudomonas putida (strain W619).